The sequence spans 611 residues: Dihydroxy-acid dehydratase (611 aa).

Asp-81 is a Mg(2+) binding site. Residue Cys-122 participates in [2Fe-2S] cluster binding. Positions 123 and 124 each coordinate Mg(2+). Lys-124 is modified (N6-carboxylysine). A [2Fe-2S] cluster-binding site is contributed by Cys-195. Glu-491 provides a ligand contact to Mg(2+). The active-site Proton acceptor is the Ser-517.

This sequence belongs to the IlvD/Edd family. Homodimer. The cofactor is [2Fe-2S] cluster. Mg(2+) serves as cofactor.

The enzyme catalyses (2R)-2,3-dihydroxy-3-methylbutanoate = 3-methyl-2-oxobutanoate + H2O. It catalyses the reaction (2R,3R)-2,3-dihydroxy-3-methylpentanoate = (S)-3-methyl-2-oxopentanoate + H2O. It functions in the pathway amino-acid biosynthesis; L-isoleucine biosynthesis; L-isoleucine from 2-oxobutanoate: step 3/4. Its pathway is amino-acid biosynthesis; L-valine biosynthesis; L-valine from pyruvate: step 3/4. Functions in the biosynthesis of branched-chain amino acids. Catalyzes the dehydration of (2R,3R)-2,3-dihydroxy-3-methylpentanoate (2,3-dihydroxy-3-methylvalerate) into 2-oxo-3-methylpentanoate (2-oxo-3-methylvalerate) and of (2R)-2,3-dihydroxy-3-methylbutanoate (2,3-dihydroxyisovalerate) into 2-oxo-3-methylbutanoate (2-oxoisovalerate), the penultimate precursor to L-isoleucine and L-valine, respectively. The sequence is that of Dihydroxy-acid dehydratase from Allorhizobium ampelinum (strain ATCC BAA-846 / DSM 112012 / S4) (Agrobacterium vitis (strain S4)).